The following is a 349-amino-acid chain: MAHQTGIHATEELKEFFAKARAGSVRLIKVVIEDEQLVLGASQEPVGRWDQDYDRAVLPLLDAQQPCYLLYRLDSQNAQGFEWLFLAWSPDNSPVRLKMLYAATRATVKKEFGGGHIKDELFGTVKDDLSFAGYQKHLSSCAAPAPLTSAERELQQIRINEVKTEISVESKHQTLQGLAFPLQPEAQRALQQLKQKMVNYIQMKLDLERETIELVHTEPTDVAQLPSRVPRDAARYHFFLYKHTHEGDPLESVVFIYSMPGYKCSIKERMLYSSCKSRLLDSVEQDFHLEIAKKIEIGDGAELTAEFLYDEVHPKQHAFKQAFAKPKGPGGKRGHKRLIRGPGENGDDS.

The residue at position 2 (Ala-2) is an N-acetylalanine. 2 ADF-H domains span residues 4-139 and 177-313; these read QTGI…KHLS and GLAF…DEVH. Lys-14 is modified (N6-acetyllysine). Position 309 is a phosphotyrosine (Tyr-309). The tract at residues 322-349 is disordered; that stretch reads AFAKPKGPGGKRGHKRLIRGPGENGDDS. Basic residues predominate over residues 330–339; the sequence is GGKRGHKRLI. Ser-349 is modified (phosphoserine).

The protein belongs to the actin-binding proteins ADF family. Twinfilin subfamily. As to quaternary structure, interacts with G-actin; ADP-actin form and capping protein (CP). May also be able to interact with TWF1 and phosphoinositides, PI(4,5)P2. When bound to PI(4,5)P2, it is down-regulated. Interacts with MYO7A. Post-translationally, in vitro, phosphorylated by PRKCZ, CK2 and SRC. In terms of tissue distribution, ubiquitously expressed (at protein level).

The protein resides in the cytoplasm. The protein localises to the cytoskeleton. Its subcellular location is the perinuclear region. It localises to the cell projection. It is found in the stereocilium. Functionally, actin-binding protein involved in motile and morphological processes. Inhibits actin polymerization, likely by sequestering G-actin. By capping the barbed ends of filaments, it also regulates motility. Seems to play an important role in clathrin-mediated endocytosis and distribution of endocytic organelles. May play a role in regulating the mature length of the middle and short rows of stereocilia. This Homo sapiens (Human) protein is Twinfilin-2 (TWF2).